A 117-amino-acid chain; its full sequence is Prefoldin subunit beta (117 aa).

The protein belongs to the prefoldin subunit beta family. As to quaternary structure, heterohexamer of two alpha and four beta subunits.

The protein resides in the cytoplasm. Functionally, molecular chaperone capable of stabilizing a range of proteins. Seems to fulfill an ATP-independent, HSP70-like function in archaeal de novo protein folding. The chain is Prefoldin subunit beta from Pyrococcus furiosus (strain ATCC 43587 / DSM 3638 / JCM 8422 / Vc1).